The chain runs to 498 residues: Glycerol kinase (498 aa).

Threonine 11 contacts ADP. ATP is bound by residues threonine 11, serine 12, and serine 13. Residue threonine 11 participates in sn-glycerol 3-phosphate binding. Arginine 15 provides a ligand contact to ADP. Sn-glycerol 3-phosphate is bound by residues arginine 81, glutamate 82, tyrosine 133, and aspartate 242. Arginine 81, glutamate 82, tyrosine 133, aspartate 242, and glutamine 243 together coordinate glycerol. Threonine 264 and glycine 307 together coordinate ADP. ATP is bound by residues threonine 264, glycine 307, glutamine 311, and glycine 408. 2 residues coordinate ADP: glycine 408 and asparagine 412.

Belongs to the FGGY kinase family.

It carries out the reaction glycerol + ATP = sn-glycerol 3-phosphate + ADP + H(+). It functions in the pathway polyol metabolism; glycerol degradation via glycerol kinase pathway; sn-glycerol 3-phosphate from glycerol: step 1/1. Its activity is regulated as follows. Inhibited by fructose 1,6-bisphosphate (FBP). In terms of biological role, key enzyme in the regulation of glycerol uptake and metabolism. Catalyzes the phosphorylation of glycerol to yield sn-glycerol 3-phosphate. This chain is Glycerol kinase, found in Ralstonia pickettii (strain 12J).